The sequence spans 191 residues: Calcium-activated potassium channel subunit beta-1 (191 aa).

Topologically, residues 1-15 (MGKKLVMAQKRGETR) are cytoplasmic. A helical membrane pass occupies residues 16–36 (ALCLGVAMVMCAVIAYYILGT). The Extracellular portion of the chain corresponds to 37 to 157 (TMLPLYQKSV…YRRLYGPQTL (121 aa)). Asn-80 and Asn-142 each carry an N-linked (GlcNAc...) asparagine glycan. The chain crosses the membrane as a helical span at residues 158–178 (LFSLFWPTFLLTGGLLIIAMV). The Cytoplasmic portion of the chain corresponds to 179-191 (KINQSLSILAAQR).

Belongs to the KCNMB (TC 8.A.14.1) family. KCNMB1 subfamily. Interacts with KCNMA1 tetramer. There are probably 4 molecules of KCMNB1 per KCNMA1 tetramer. N-glycosylated.

It localises to the membrane. Functionally, regulatory subunit of the calcium activated potassium KCNMA1 (maxiK) channel. Modulates the calcium sensitivity and gating kinetics of KCNMA1, thereby contributing to KCNMA1 channel diversity. Increases the apparent Ca(2+)/voltage sensitivity of the KCNMA1 channel. It also modifies KCNMA1 channel kinetics and alters its pharmacological properties. It slows down the activation and the deactivation kinetics of the channel. Acts as a negative regulator of smooth muscle contraction by enhancing the calcium sensitivity to KCNMA1. Its presence is also a requirement for internal binding of the KCNMA1 channel opener dehydrosoyasaponin I (DHS-1) triterpene glycoside and for external binding of the agonist hormone 17-beta-estradiol (E2). Increases the binding activity of charybdotoxin (CTX) toxin to KCNMA1 peptide blocker by increasing the CTX association rate and decreasing the dissociation rate. The sequence is that of Calcium-activated potassium channel subunit beta-1 (KCNMB1) from Canis lupus familiaris (Dog).